The sequence spans 370 residues: CST complex subunit STN1 (370 aa).

An interaction with CTC1 region spans residues 1–187 (MESNSSQCED…KVYDQPFHSP (187 aa)). The OB DNA-binding region spans 57-157 (VDILGTVIGV…EIHATTYYKV (101 aa)). Winged helix-turn-helix (wHTH) regions lie at residues 193–297 (EALS…YVTR) and 298–370 (EDKE…YTAF).

Belongs to the STN1 family. Component of the CST complex, composed of TEN1/C17orf106, CTC1/C17orf68 and STN1; in the complex interacts directly with TEN1 and CTC1. Interacts with ACD/TPP1, POT1 and POLA1.

The protein localises to the nucleus. The protein resides in the chromosome. It localises to the telomere. Its function is as follows. Component of the CST complex proposed to act as a specialized replication factor promoting DNA replication under conditions of replication stress or natural replication barriers such as the telomere duplex. The CST complex binds single-stranded DNA with high affinity in a sequence-independent manner, while isolated subunits bind DNA with low affinity by themselves. Initially the CST complex has been proposed to protect telomeres from DNA degradation. However, the CST complex has been shown to be involved in several aspects of telomere replication. The CST complex inhibits telomerase and is involved in telomere length homeostasis; it is proposed to bind to newly telomerase-synthesized 3' overhangs and to terminate telomerase action implicating the association with the ACD:POT1 complex thus interfering with its telomerase stimulation activity. The CST complex is also proposed to be involved in fill-in synthesis of the telomeric C-strand probably implicating recruitment and activation of DNA polymerase alpha. The CST complex facilitates recovery from many forms of exogenous DNA damage; seems to be involved in the re-initiation of DNA replication at repaired forks and/or dormant origins. Required for efficicient replication of the duplex region of the telomere. Promotes efficient replication of lagging-strand telomeres. Promotes general replication start following replication-fork stalling implicating new origin firing. May be in involved in C-strand fill-in during late S/G2 phase independent of its role in telomere duplex replication. The protein is CST complex subunit STN1 of Bos taurus (Bovine).